A 278-amino-acid chain; its full sequence is Type II restriction enzyme NgoPII (278 aa).

It belongs to the NgoPII type II restriction endonuclease family.

The catalysed reaction is Endonucleolytic cleavage of DNA to give specific double-stranded fragments with terminal 5'-phosphates.. Its function is as follows. A P subtype restriction enzyme that recognizes the double-stranded sequence 5'-GGCC-3' and cleaves after G-2. The polypeptide is Type II restriction enzyme NgoPII (ngoPIIR) (Neisseria gonorrhoeae).